Reading from the N-terminus, the 536-residue chain is Glucan 1,6-alpha-glucosidase (536 aa).

The active-site Nucleophile is D194. E236 functions as the Proton donor in the catalytic mechanism.

It belongs to the glycosyl hydrolase 13 family.

It localises to the cytoplasm. The catalysed reaction is Hydrolysis of (1-&gt;6)-alpha-D-glucosidic linkages in (1-&gt;6)-alpha-D-glucans and derived oligosaccharides.. Functionally, the physiological substrates may be short isomaltosaccharides. This chain is Glucan 1,6-alpha-glucosidase (dexB), found in Streptococcus mutans serotype c (strain ATCC 700610 / UA159).